The chain runs to 314 residues: WD repeat-containing protein 38 (314 aa).

WD repeat units follow at residues 19–58 (QHGG…LLWR), 61–100 (GHTG…CLRV), 103–142 (GHQR…MLRL), 145–184 (GHRD…PAVS), 190–228 (GHSA…LLIQ), 231–272 (GHVT…ETLK), and 274–312 (VLDV…PRDP). Residues 294–314 (AADQTRRQISRTSKSPRDPQT) are disordered.

The sequence is that of WD repeat-containing protein 38 (WDR38) from Homo sapiens (Human).